Reading from the N-terminus, the 281-residue chain is Fructose-bisphosphate aldolase class 1 (281 aa).

Lys-191 (schiff-base intermediate with dihydroxyacetone-P) is an active-site residue.

Belongs to the DeoC/FbaB aldolase family. As to quaternary structure, homooctamer.

It is found in the cytoplasm. The protein localises to the chromosome. The catalysed reaction is beta-D-fructose 1,6-bisphosphate = D-glyceraldehyde 3-phosphate + dihydroxyacetone phosphate. Activated by citrate. This chain is Fructose-bisphosphate aldolase class 1 (fba), found in Thermococcus kodakarensis (strain ATCC BAA-918 / JCM 12380 / KOD1) (Pyrococcus kodakaraensis (strain KOD1)).